We begin with the raw amino-acid sequence, 467 residues long: 3-isopropylmalate dehydratase large subunit (467 aa).

[4Fe-4S] cluster contacts are provided by C349, C408, and C411.

It belongs to the aconitase/IPM isomerase family. LeuC type 1 subfamily. In terms of assembly, heterodimer of LeuC and LeuD. [4Fe-4S] cluster is required as a cofactor.

The enzyme catalyses (2R,3S)-3-isopropylmalate = (2S)-2-isopropylmalate. It functions in the pathway amino-acid biosynthesis; L-leucine biosynthesis; L-leucine from 3-methyl-2-oxobutanoate: step 2/4. In terms of biological role, catalyzes the isomerization between 2-isopropylmalate and 3-isopropylmalate, via the formation of 2-isopropylmaleate. The sequence is that of 3-isopropylmalate dehydratase large subunit from Dinoroseobacter shibae (strain DSM 16493 / NCIMB 14021 / DFL 12).